Here is a 504-residue protein sequence, read N- to C-terminus: Transcription factor NDT80 (504 aa).

3 disordered regions span residues 64-172 (MHFN…QHHM), 283-310 (NGFPPHHPSHPQNQPQNHPGHPHHNQHA), and 477-504 (RGRSPSSYHKDRTSGYRATNTPTPTPPQ). Composition is skewed to low complexity over residues 73 to 87 (QQQQQQQQQQQQQQQ), 103 to 145 (QGPT…ARQP), 153 to 172 (QQAQNQDQADAQSQAQQHHM), and 292 to 301 (HPQNQPQNHP). Positions 160–488 (QADAQSQAQQ…RSPSSYHKDR (329 aa)) form a DNA-binding region, NDT80.

The protein resides in the nucleus. Meiosis-specific transcription factor that binds to the middle sporulation element (MSE) of targeted genes corresponding to the consensus sequence 5'-ACACAAA-3'. Acts as an activator of CDR1 induction by antifungal drugs. Modulates azole sensitivity by controlling the expression of ergosterol biosynthesis genes. Required for hyphal growth in response to different filament-inducing cues and for the proper expression of genes characterizing the filamentous transcriptional program including noteworthy genes encoding cell wall components, such as HWP1, ECE1, RBT4, and ALS3. Is essential for the completion of cell separation through the direct transcriptional regulation of genes encoding the chitinase CHT3 and the cell wall glucosidase SUN41. Required for biofilm formation and plays a key role in microcolony formation under both flow and static conditions and to epithelial surfaces. Essential for virulence. The protein is Transcription factor NDT80 of Candida albicans (strain SC5314 / ATCC MYA-2876) (Yeast).